Consider the following 657-residue polypeptide: Probable intron-encoded endonuclease aI2 (657 aa).

The tract at residues methionine 1–glycine 245 is COX1 exons 1 to 2 encoded. Transmembrane regions (helical) follow at residues isoleucine 19–valine 39, leucine 69–leucine 89, leucine 103–leucine 123, alanine 152–valine 172, proline 188–leucine 208, and methionine 269–valine 289. The interval glutamine 246–phenylalanine 657 is COX1 intron 2 encoded.

In the C-terminal section; belongs to the LAGLIDADG endonuclease family. The protein in the N-terminal section; belongs to the heme-copper respiratory oxidase family. In terms of processing, the mature protein may arise from proteolytic cleavage of an in-frame translation of COX1 exons 1 and 2 plus intron 2, containing the aI2 open reading frame.

It localises to the mitochondrion. It is found in the membrane. Mitochondrial DNA endonuclease involved in intron homing. The polypeptide is Probable intron-encoded endonuclease aI2 (aI2) (Debaryomyces hansenii (strain ATCC 36239 / CBS 767 / BCRC 21394 / JCM 1990 / NBRC 0083 / IGC 2968) (Yeast)).